A 326-amino-acid polypeptide reads, in one-letter code: MKPSIVLYKSIPTDLHQRLAQHFTVNSFDGLTPDNQPELLAALQQAEGLIGSGGKIDQDFLQLAPNLRAASTISVGYDNFDVEALSQRGIALMHTPTVLTETVADTMMALMLSTARRVVELAERVKAGEWQESIGDDWFGVDVHHKTIGILGMGRIGMALAQRAHFGFSMPVLYTSRRPHEAAEQRFGARHCSLDTLLAEADFLCITLPMTEQTYHMIGREQLAKMKSSAILINAGRGPVVDEQALIAALQDGTIHAAGLDVFEQEPLPVDSPLLTLRNVVAVPHIGSATHETRYNMAACAVDNLINALTGTVKENCVNPQVLITH.

Active-site residues include R237 and E266. The Proton donor role is filled by H285.

The protein belongs to the D-isomer specific 2-hydroxyacid dehydrogenase family. GhrB subfamily. As to quaternary structure, homodimer.

The protein localises to the cytoplasm. The enzyme catalyses glycolate + NADP(+) = glyoxylate + NADPH + H(+). The catalysed reaction is (R)-glycerate + NAD(+) = 3-hydroxypyruvate + NADH + H(+). It catalyses the reaction (R)-glycerate + NADP(+) = 3-hydroxypyruvate + NADPH + H(+). Its function is as follows. Catalyzes the NADPH-dependent reduction of glyoxylate and hydroxypyruvate into glycolate and glycerate, respectively. The chain is Glyoxylate/hydroxypyruvate reductase B from Yersinia pseudotuberculosis serotype O:1b (strain IP 31758).